Here is a 77-residue protein sequence, read N- to C-terminus: Envelope protein US9 homolog (77 aa).

Residues 12–13 (LL) carry the Di-leucine internalization motif motif.

This sequence belongs to the alphaherpesvirinae envelope protein US9 family.

The polypeptide is Envelope protein US9 homolog (Chlorocebus aethiops (Green monkey)).